Here is a 60-residue protein sequence, read N- to C-terminus: Histidine-rich metal-binding polypeptide (60 aa).

A disordered region spans residues 1–60 (MAHHEEQHGGHHHHHHHTHHHHYHGGEHHHHHHSSHHEEGCCSTSDSHHQEEGCCHGHHE). Basic residues predominate over residues 10-35 (GHHHHHHHTHHHHYHGGEHHHHHHSS). The span at 36 to 60 (HHEEGCCSTSDSHHQEEGCCHGHHE) shows a compositional bias: basic and acidic residues. 2 repeat units span residues 38 to 42 (EEGCC) and 51 to 55 (EEGCC). Positions 38-55 (EEGCCSTSDSHHQEEGCC) are 2 X 5 AA repeats of E-E-G-C-C.

Its function is as follows. Strongly binds nickel and zinc. Binds other metals less strongly: cobalt &gt; copper &gt; cadmium &gt; manganese. May act to increase, or at least to preserve, urease activity. Exact function is still unknown. The chain is Histidine-rich metal-binding polypeptide (hpn) from Helicobacter pylori (strain J99 / ATCC 700824) (Campylobacter pylori J99).